Here is a 154-residue protein sequence, read N- to C-terminus: Ribonuclease 8 (154 aa).

Positions 1-27 (MAPARAGCCPLLLLLLGLWVAEVLVRA) are cleaved as a signal peptide. The active-site Proton acceptor is the H42. Disulfide bonds link C50/C93, C64/C118, C82/C133, and C89/C96. Substrate-binding positions include 65–69 (KDLNT) and K90. Residue H149 is the Proton donor of the active site.

The protein belongs to the pancreatic ribonuclease family. In terms of tissue distribution, expressed prominently in the placenta and is not detected in any other tissues examined.

The protein resides in the secreted. Functionally, has a low ribonuclease activity. This Homo sapiens (Human) protein is Ribonuclease 8 (RNASE8).